The chain runs to 236 residues: MLTKKQSELLRFINERMKETGVPPSFDEMKDALDLRSKSGIHRLIIALEERGFIRRLPNRARALEVLRMPGASAADAGRGRKFEPSVIEGHLGRVRPMPAARDDEDGARAMVAIPVMGRIAAGTPISALQTRSHTLNLPPEMLSQGEHYALEVRGDSMIDAGIFDADTVLIRKQDTAETGDIVVALIDDEEATLKRLRRRGASIALEAANPAYETRIFGPDRVRIQGKLVGLIRRY.

The segment at residues 26 to 46 (FDEMKDALDLRSKSGIHRLII) is a DNA-binding region (H-T-H motif). Residues Ser-157 and Lys-195 each act as for autocatalytic cleavage activity in the active site.

It belongs to the peptidase S24 family. In terms of assembly, homodimer.

It carries out the reaction Hydrolysis of Ala-|-Gly bond in repressor LexA.. In terms of biological role, represses a number of genes involved in the response to DNA damage (SOS response), including recA and lexA. In the presence of single-stranded DNA, RecA interacts with LexA causing an autocatalytic cleavage which disrupts the DNA-binding part of LexA, leading to derepression of the SOS regulon and eventually DNA repair. The chain is LexA repressor from Methylocella silvestris (strain DSM 15510 / CIP 108128 / LMG 27833 / NCIMB 13906 / BL2).